Here is a 428-residue protein sequence, read N- to C-terminus: Secernin-2 (428 aa).

Cysteine 10 is an active-site residue.

Belongs to the peptidase C69 family. Secernin subfamily.

The protein is Secernin-2 (scrn2) of Xenopus laevis (African clawed frog).